Consider the following 861-residue polypeptide: Putative glutamate--cysteine ligase 2-2 (861 aa).

The tract at residues 1–372 (MSDARIVAVG…RDVPPAGAAA (372 aa)) is carboxylate-amine ligase. The tract at residues 373–861 (ALGSAPAVSA…GSKDTWIPRR (489 aa)) is unknown.

In the N-terminal section; belongs to the glutamate--cysteine ligase type 2 family. YbdK subfamily.

The catalysed reaction is L-cysteine + L-glutamate + ATP = gamma-L-glutamyl-L-cysteine + ADP + phosphate + H(+). In terms of biological role, ATP-dependent carboxylate-amine ligase which exhibits weak glutamate--cysteine ligase activity. This chain is Putative glutamate--cysteine ligase 2-2, found in Frankia casuarinae (strain DSM 45818 / CECT 9043 / HFP020203 / CcI3).